The primary structure comprises 563 residues: Putative solute carrier family 26 member 10P (563 aa).

5 helical membrane passes run Ala45–Ile65, Leu75–Val91, Val116–Leu136, Ala152–Leu172, and Leu352–Phe372. An STAS domain is found at Arg406–Ala541.

The protein belongs to the SLC26A/SulP transporter (TC 2.A.53) family.

The protein resides in the membrane. In terms of biological role, chloride/bicarbonate exchanger. This is Putative solute carrier family 26 member 10P (SLC26A10P) from Homo sapiens (Human).